Here is a 23-residue protein sequence, read N- to C-terminus: Magainin-R2 (23 aa).

As to expression, expressed by the skin glands.

It localises to the secreted. In terms of biological role, antimicrobial peptide. This is Magainin-R2 from Xenopus ruwenzoriensis (Uganda clawed frog).